The sequence spans 153 residues: SsrA-binding protein (153 aa).

The segment at 131-153 (EYDKRDSIRERDDRREMDRAFKR) is disordered.

Belongs to the SmpB family.

It localises to the cytoplasm. Its function is as follows. Required for rescue of stalled ribosomes mediated by trans-translation. Binds to transfer-messenger RNA (tmRNA), required for stable association of tmRNA with ribosomes. tmRNA and SmpB together mimic tRNA shape, replacing the anticodon stem-loop with SmpB. tmRNA is encoded by the ssrA gene; the 2 termini fold to resemble tRNA(Ala) and it encodes a 'tag peptide', a short internal open reading frame. During trans-translation Ala-aminoacylated tmRNA acts like a tRNA, entering the A-site of stalled ribosomes, displacing the stalled mRNA. The ribosome then switches to translate the ORF on the tmRNA; the nascent peptide is terminated with the 'tag peptide' encoded by the tmRNA and targeted for degradation. The ribosome is freed to recommence translation, which seems to be the essential function of trans-translation. The chain is SsrA-binding protein from Parabacteroides distasonis (strain ATCC 8503 / DSM 20701 / CIP 104284 / JCM 5825 / NCTC 11152).